The primary structure comprises 258 residues: Type III pantothenate kinase (258 aa).

Position 6-13 (6-13 (DVGNTNTV)) interacts with ATP. Substrate-binding positions include Tyr100 and 107–110 (GADR). Asp109 functions as the Proton acceptor in the catalytic mechanism. Asp129 serves as a coordination point for K(+). Thr132 serves as a coordination point for ATP. Thr184 contributes to the substrate binding site.

Belongs to the type III pantothenate kinase family. Homodimer. NH4(+) serves as cofactor. It depends on K(+) as a cofactor.

It is found in the cytoplasm. The enzyme catalyses (R)-pantothenate + ATP = (R)-4'-phosphopantothenate + ADP + H(+). Its pathway is cofactor biosynthesis; coenzyme A biosynthesis; CoA from (R)-pantothenate: step 1/5. In terms of biological role, catalyzes the phosphorylation of pantothenate (Pan), the first step in CoA biosynthesis. The sequence is that of Type III pantothenate kinase from Bacillus velezensis (strain DSM 23117 / BGSC 10A6 / LMG 26770 / FZB42) (Bacillus amyloliquefaciens subsp. plantarum).